Consider the following 86-residue polypeptide: MKTLILVVIALMVIEVKSDGYLMVRAGREKGCKIWCVINNEYCDKDCKLKGGNYGYCYFWKLACYCEGLPTSSPDIWTYEKNTCST.

The N-terminal stretch at 1–18 is a signal peptide; that stretch reads MKTLILVVIALMVIEVKS. One can recognise an LCN-type CS-alpha/beta domain in the interval 19–85; the sequence is DGYLMVRAGR…IWTYEKNTCS (67 aa). 4 disulfides stabilise this stretch: Cys32–Cys84, Cys36–Cys57, Cys43–Cys64, and Cys47–Cys66.

The protein belongs to the long (4 C-C) scorpion toxin superfamily. Sodium channel inhibitor family. Beta subfamily. Expressed by the venom gland.

The protein localises to the secreted. Functionally, binds voltage-independently at site-4 of sodium channels (Nav) and shift the voltage of activation toward more negative potentials thereby affecting sodium channel activation and promoting spontaneous and repetitive firing. The sequence is that of Neurotoxin LmNaTx34.2 from Lychas mucronatus (Chinese swimming scorpion).